The primary structure comprises 568 residues: Sulfite reductase [NADPH] hemoprotein beta-component (568 aa).

4 residues coordinate [4Fe-4S] cluster: cysteine 426, cysteine 432, cysteine 471, and cysteine 475. Cysteine 475 is a siroheme binding site.

It belongs to the nitrite and sulfite reductase 4Fe-4S domain family. In terms of assembly, alpha(8)-beta(8). The alpha component is a flavoprotein, the beta component is a hemoprotein. Siroheme is required as a cofactor. Requires [4Fe-4S] cluster as cofactor.

The catalysed reaction is hydrogen sulfide + 3 NADP(+) + 3 H2O = sulfite + 3 NADPH + 4 H(+). It participates in sulfur metabolism; hydrogen sulfide biosynthesis; hydrogen sulfide from sulfite (NADPH route): step 1/1. Functionally, component of the sulfite reductase complex that catalyzes the 6-electron reduction of sulfite to sulfide. This is one of several activities required for the biosynthesis of L-cysteine from sulfate. This chain is Sulfite reductase [NADPH] hemoprotein beta-component, found in Xylella fastidiosa (strain 9a5c).